A 140-amino-acid chain; its full sequence is uncharacterized protein (140 aa).

It belongs to the peptidase S24 family.

This is an uncharacterized protein from Haemophilus influenzae (strain ATCC 51907 / DSM 11121 / KW20 / Rd).